Reading from the N-terminus, the 165-residue chain is MAGRKEEELKDLTLLGNQGTTYSFTYNPNLLEVFDNKHPDRDYFVKFNCPEFTTLCPKTGQPDFATIYISYIPDKKCVESKSLKLYLFSFRNHGDFHEDCVNIIMNDLIKVMEPRYIEVWGKFTPRGGISIDPYCNWGRPGTKYEKMAEYRLLNHDLYPEKVDNR.

The active-site Thioimide intermediate is the C56. The Proton donor role is filled by D63. Residues 78-80 and 97-98 contribute to the substrate site; these read VES and HE.

This sequence belongs to the GTP cyclohydrolase I family. QueF type 1 subfamily.

It localises to the cytoplasm. It catalyses the reaction 7-aminomethyl-7-carbaguanine + 2 NADP(+) = 7-cyano-7-deazaguanine + 2 NADPH + 3 H(+). Its pathway is tRNA modification; tRNA-queuosine biosynthesis. Its activity is regulated as follows. Is totally inhibited by 4-aminobenzylcyanide in vitro. Its function is as follows. Catalyzes the NADPH-dependent reduction of 7-cyano-7-deazaguanine (preQ0) to 7-aminomethyl-7-deazaguanine (preQ1), a late step in the queuosine pathway. Is highly specific for its natural substrate preQ0, since it cannot use various aliphatic, aromatic and heterocyclic nitriles, although it can reduce the substrate analog 5-cyanopyrrolo[2,3-d]pyrimidin-4-one with lesser efficiency. This is NADPH-dependent 7-cyano-7-deazaguanine reductase from Geobacillus kaustophilus (strain HTA426).